Here is a 460-residue protein sequence, read N- to C-terminus: tRNA modification GTPase MnmE (460 aa).

Positions 29, 91, and 132 each coordinate (6S)-5-formyl-5,6,7,8-tetrahydrofolate. Residues 227-383 (GISIALIGKT…LIDTIIKKCG (157 aa)) form the TrmE-type G domain. A K(+)-binding site is contributed by Asn-237. GTP contacts are provided by residues 237-242 (NVGKSS), 256-262 (TNIPGTT), and 281-284 (DTAG). A Mg(2+)-binding site is contributed by Ser-241. K(+) contacts are provided by Thr-256, Ile-258, and Thr-261. Thr-262 contacts Mg(2+). Lys-460 lines the (6S)-5-formyl-5,6,7,8-tetrahydrofolate pocket.

This sequence belongs to the TRAFAC class TrmE-Era-EngA-EngB-Septin-like GTPase superfamily. TrmE GTPase family. As to quaternary structure, homodimer. Heterotetramer of two MnmE and two MnmG subunits. Requires K(+) as cofactor.

The protein resides in the cytoplasm. Exhibits a very high intrinsic GTPase hydrolysis rate. Involved in the addition of a carboxymethylaminomethyl (cmnm) group at the wobble position (U34) of certain tRNAs, forming tRNA-cmnm(5)s(2)U34. This Prochlorococcus marinus (strain AS9601) protein is tRNA modification GTPase MnmE.